The sequence spans 101 residues: Apolipoprotein C-II (101 aa).

Residues 1 to 22 (MGTRFLLALFLVLLVLGFEVQG) form the signal peptide. The lipid binding stretch occupies residues 66-74 (TVDEKLRDM). A lipoprotein lipase cofactor region spans residues 78–101 (STAAMSTYAGILTDQVLSMLKGEE).

It belongs to the apolipoprotein C2 family. Proapolipoprotein C-II is synthesized as a sialic acid containing glycoprotein which is subsequently desialylated prior to its proteolytic processing. In terms of processing, proapolipoprotein C-II, the major form found in plasma undergoes proteolytic cleavage of its N-terminal hexapeptide to generate apolipoprotein C-II, which occurs as the minor form in plasma.

Its subcellular location is the secreted. Component of chylomicrons, very low-density lipoproteins (VLDL), low-density lipoproteins (LDL), and high-density lipoproteins (HDL) in plasma. Plays an important role in lipoprotein metabolism as an activator of lipoprotein lipase. Both proapolipoprotein C-II and apolipoprotein C-II can activate lipoprotein lipase. The polypeptide is Apolipoprotein C-II (APOC2) (Plecturocebus moloch (Dusky titi monkey)).